The chain runs to 298 residues: Small ribosomal subunit protein uS2 (298 aa).

Residues 232 to 298 are disordered; that stretch reads ETFEGDDIPS…TAEAEEPAAE (67 aa). Acidic residues predominate over residues 234-250; sequence FEGDDIPSAIDFEDETP. Low complexity predominate over residues 251 to 276; that stretch reads EPVAEVADAEVAAAEPVAEAAPTAEA.

Belongs to the universal ribosomal protein uS2 family.

This Acaryochloris marina (strain MBIC 11017) protein is Small ribosomal subunit protein uS2.